The primary structure comprises 545 residues: Eukaryotic translation initiation factor 3 subunit D-2 (545 aa).

A disordered region spans residues 94–148 (FQRGRFRGNTRNNPRTRGRTGRGGAVTGTGGNQPGVGVNERTKYGKGRDNRRQMG). Over residues 95–113 (QRGRFRGNTRNNPRTRGRT) the composition is skewed to basic residues. A compositionally biased stretch (gly residues) spans 114 to 127 (GRGGAVTGTGGNQP). Over residues 133–145 (ERTKYGKGRDNRR) the composition is skewed to basic and acidic residues. The tract at residues 287 to 301 (QFDLLTVNETALEPP) is RNA gate.

It belongs to the eIF-3 subunit D family. In terms of assembly, component of the eukaryotic translation initiation factor 3 (eIF-3) complex. The eIF-3 complex interacts with pix.

It is found in the cytoplasm. In terms of biological role, mRNA cap-binding component of the eukaryotic translation initiation factor 3 (eIF-3) complex, which is involved in protein synthesis of a specialized repertoire of mRNAs and, together with other initiation factors, stimulates binding of mRNA and methionyl-tRNAi to the 40S ribosome. The eIF-3 complex specifically targets and initiates translation of a subset of mRNAs involved in cell proliferation. In the eIF-3 complex, eif3d specifically recognizes and binds the 7-methylguanosine cap of a subset of mRNAs. The protein is Eukaryotic translation initiation factor 3 subunit D-2 of Drosophila pseudoobscura pseudoobscura (Fruit fly).